The sequence spans 1522 residues: ATP-binding cassette sub-family C member 3 (1522 aa).

Topologically, residues 1 to 32 are extracellular; it reads MDRLCGSGELGSKFWDSNLTVYTNTPDLTPCF. N-linked (GlcNAc...) asparagine glycosylation occurs at N18. Residues 33-53 form a helical membrane-spanning segment; the sequence is QNSLLAWVPCIYLWAALPCYL. Residues 54-73 are Cytoplasmic-facing; it reads FYLRHHRLGYIVLSCLSRLK. Residues 74–94 traverse the membrane as a helical segment; the sequence is TALGVLLWCISWVDLFYSFHG. Residues 95–99 are Extracellular-facing; it reads LVHGS. The helical transmembrane segment at 100–120 threads the bilayer; sequence SPAPVFFITPLLVGITMLLAT. Residues 121 to 132 lie on the Cytoplasmic side of the membrane; the sequence is LLIQYERLRGVR. A helical transmembrane segment spans residues 133-153; it reads SSGVLIIFWLLCVICAIIPFR. Residues 154 to 171 are Extracellular-facing; sequence SKILLALAEGKILDPFRF. Residues 172–192 form a helical membrane-spanning segment; sequence TTFYIYFALVLCAFILSCFQE. Over 193–301 the chain is Cytoplasmic; sequence KPPLFSPENL…KTKKPSFLRA (109 aa). Residues 302–322 form a helical membrane-spanning segment; sequence LVRTFTSSLLMGACFKLIQDL. Residues 310–592 enclose the ABC transmembrane type-1 1 domain; the sequence is LLMGACFKLI…LPQLISGMTQ (283 aa). At 323 to 347 the chain is on the extracellular side; that stretch reads SPSSTHSCSASSSGLFRPHGPYWWG. A helical membrane pass occupies residues 348 to 368; sequence FLLAGLMFVSSTMQTLILHQH. At 369-424 the chain is on the cytoplasmic side; it reads YHCIFVMALRIRTAIIGVIYRKALTITNSVKREYTVGEMVNLMSVDAQRFMDVSPF. The chain crosses the membrane as a helical span at residues 425–445; that stretch reads INLLWSAPLQVILAIYFLWQI. Residues 446–448 lie on the Extracellular side of the membrane; the sequence is LGP. A helical transmembrane segment spans residues 449 to 469; it reads SALAGVAVIVLLIPLNGAVSM. At 470–531 the chain is on the cytoplasmic side; sequence KMKTYQVQQM…LLRKGAYLQA (62 aa). Residues 532–552 form a helical membrane-spanning segment; it reads ISTFIWVCTPFMVTLITLGVY. Over 553–574 the chain is Extracellular; that stretch reads VCVDKNNVLDAEKAFVSLSLFN. A helical transmembrane segment spans residues 575–595; the sequence is ILKIPLNLLPQLISGMTQTSV. The Cytoplasmic portion of the chain corresponds to 596 to 958; the sequence is SLKRIQDFLN…VKLSVYWDYA (363 aa). Residues 625-849 form the ABC transporter 1 domain; that stretch reads ITIHNGTFSW…DGSFANFLRN (225 aa). Residue 659–666 participates in ATP binding; that stretch reads GPVGCGKS. 2 positions are modified to phosphoserine: S902 and S905. The chain crosses the membrane as a helical span at residues 959 to 979; it reads KSVGLCTTLFICLLYAGQNAV. Positions 966–1247 constitute an ABC transmembrane type-1 2 domain; the sequence is TLFICLLYAG…MIRTLSDLES (282 aa). At 980–1016 the chain is on the extracellular side; the sequence is AIGANVWLSAWTNDVEEHGQQNNTSVRLGVYATLGIL. N1001 and N1002 each carry an N-linked (GlcNAc...) asparagine glycan. A helical membrane pass occupies residues 1017 to 1037; the sequence is QGLLVMLSAFTMVVGAIQAAR. Over 1038–1080 the chain is Cytoplasmic; that stretch reads LLHTALLHNQIRAPQSFFDTTPSGRILNRFSKDIYVIHEVLAP. The chain crosses the membrane as a helical span at residues 1081 to 1101; the sequence is TILMLFNSFYTSISTIVVIVA. S1102 is a topological domain (extracellular). The chain crosses the membrane as a helical span at residues 1103–1123; sequence TPLFCVVVLPLAVFYGFVQRF. The Cytoplasmic portion of the chain corresponds to 1124–1194; it reads YVATSRQLKR…ASNRWLGVHV (71 aa). The helical transmembrane segment at 1195–1215 threads the bilayer; it reads EFVGNCVVLFSALFAVIGRNS. The Extracellular portion of the chain corresponds to 1216-1217; the sequence is LN. Residues 1218-1238 form a helical membrane-spanning segment; that stretch reads PGLVGLSVSYALQVTLSLNWM. The Cytoplasmic segment spans residues 1239–1522; it reads IRTLSDLESN…YGMAKDAGLA (284 aa). One can recognise an ABC transporter 2 domain in the interval 1286–1518; it reads FRNYSVRYRP…GGIFYGMAKD (233 aa). 1318–1325 is an ATP binding site; sequence GRTGAGKS.

Belongs to the ABC transporter superfamily. ABCC family. Conjugate transporter (TC 3.A.1.208) subfamily. In terms of tissue distribution, expressed in lung, ileum, colon and liver. Higher in liver of Eisai hyperbilirubinemic rats.

It localises to the basolateral cell membrane. It is found in the basal cell membrane. It carries out the reaction an S-substituted glutathione(in) + ATP + H2O = an S-substituted glutathione(out) + ADP + phosphate + H(+). The enzyme catalyses ATP + H2O + xenobioticSide 1 = ADP + phosphate + xenobioticSide 2.. The catalysed reaction is taurocholate(in) + ATP + H2O = taurocholate(out) + ADP + phosphate + H(+). It catalyses the reaction glycocholate(in) + ATP + H2O = glycocholate(out) + ADP + phosphate + H(+). It carries out the reaction taurolithocholate 3-sulfate(in) + ATP + H2O = taurolithocholate 3-sulfate(out) + ADP + phosphate + H(+). The enzyme catalyses 17beta-estradiol 17-O-(beta-D-glucuronate)(in) + ATP + H2O = 17beta-estradiol 17-O-(beta-D-glucuronate)(out) + ADP + phosphate + H(+). The catalysed reaction is dehydroepiandrosterone 3-sulfate(in) + ATP + H2O = dehydroepiandrosterone 3-sulfate(out) + ADP + phosphate + H(+). It catalyses the reaction leukotriene C4(in) + ATP + H2O = leukotriene C4(out) + ADP + phosphate + H(+). It carries out the reaction (4Z,15Z)-bilirubin IXalpha C8-beta-D-glucuronoside(in) + ATP + H2O = (4Z,15Z)-bilirubin IXalpha C8-beta-D-glucuronoside(out) + ADP + phosphate + H(+). The enzyme catalyses (4Z,15Z)-bilirubin IXalpha C8,C12-beta-D-bisglucuronoside(in) + ATP + H2O = (4Z,15Z)-bilirubin IXalpha C8,C12-beta-D-bisglucuronoside(out) + ADP + phosphate + H(+). The catalysed reaction is taurochenodeoxycholate 3-sulfate(in) + ATP + H2O = taurochenodeoxycholate 3-sulfate(out) + ADP + phosphate + H(+). Its function is as follows. ATP-dependent transporter of the ATP-binding cassette (ABC) family that binds and hydrolyzes ATP to enable active transport of various substrates including many drugs, toxicants and endogenous compound across cell membranes. Transports glucuronide conjugates such as bilirubin diglucuronide, estradiol-17-beta-o-glucuronide and GSH conjugates such as leukotriene C4 (LTC4). Transports also various bile salts (taurocholate, glycocholate, taurochenodeoxycholate-3-sulfate, taurolithocholate- 3-sulfate). Does not contribute substantially to bile salt physiology but provides an alternative route for the export of bile acids and glucuronides from cholestatic hepatocytes. May contribute to regulate the transport of organic compounds in testes across the blood-testis-barrier. In Rattus norvegicus (Rat), this protein is ATP-binding cassette sub-family C member 3 (Abcc3).